Here is a 40-residue protein sequence, read N- to C-terminus: Photosystem II reaction center protein J (40 aa).

The helical transmembrane segment at 8-28 threads the bilayer; sequence IPLWLIGTVTGIPVIGLVGIF.

The protein belongs to the PsbJ family. As to quaternary structure, PSII is composed of 1 copy each of membrane proteins PsbA, PsbB, PsbC, PsbD, PsbE, PsbF, PsbH, PsbI, PsbJ, PsbK, PsbL, PsbM, PsbT, PsbX, PsbY, PsbZ, Psb30/Ycf12, at least 3 peripheral proteins of the oxygen-evolving complex and a large number of cofactors. It forms dimeric complexes.

The protein resides in the plastid. The protein localises to the chloroplast thylakoid membrane. Functionally, one of the components of the core complex of photosystem II (PSII). PSII is a light-driven water:plastoquinone oxidoreductase that uses light energy to abstract electrons from H(2)O, generating O(2) and a proton gradient subsequently used for ATP formation. It consists of a core antenna complex that captures photons, and an electron transfer chain that converts photonic excitation into a charge separation. The chain is Photosystem II reaction center protein J from Cucumis sativus (Cucumber).